We begin with the raw amino-acid sequence, 154 residues long: 6,7-dimethyl-8-ribityllumazine synthase (154 aa).

Residues Trp22, 56–58 (AWE), and 80–82 (CVV) each bind 5-amino-6-(D-ribitylamino)uracil. Position 85 to 86 (85 to 86 (DT)) interacts with (2S)-2-hydroxy-3-oxobutyl phosphate. His88 functions as the Proton donor in the catalytic mechanism. Asn113 provides a ligand contact to 5-amino-6-(D-ribitylamino)uracil. Residue Arg127 coordinates (2S)-2-hydroxy-3-oxobutyl phosphate.

This sequence belongs to the DMRL synthase family. Forms an icosahedral capsid composed of 60 subunits, arranged as a dodecamer of pentamers.

The enzyme catalyses (2S)-2-hydroxy-3-oxobutyl phosphate + 5-amino-6-(D-ribitylamino)uracil = 6,7-dimethyl-8-(1-D-ribityl)lumazine + phosphate + 2 H2O + H(+). It functions in the pathway cofactor biosynthesis; riboflavin biosynthesis; riboflavin from 2-hydroxy-3-oxobutyl phosphate and 5-amino-6-(D-ribitylamino)uracil: step 1/2. Catalyzes the formation of 6,7-dimethyl-8-ribityllumazine by condensation of 5-amino-6-(D-ribitylamino)uracil with 3,4-dihydroxy-2-butanone 4-phosphate. This is the penultimate step in the biosynthesis of riboflavin. The polypeptide is 6,7-dimethyl-8-ribityllumazine synthase (Xylella fastidiosa (strain 9a5c)).